We begin with the raw amino-acid sequence, 306 residues long: Uracil phosphoribosyltransferase homolog (306 aa).

2 disordered regions span residues 1 to 28 (MATELRCPDSMPCHNQQVNSASTQNPEP) and 58 to 87 (SSVPAELDPQASGGATFNSENNGGTGNYDA). Polar residues-rich tracts occupy residues 13-28 (CHNQQVNSASTQNPEP) and 70-79 (GGATFNSENN). GTP contacts are provided by residues Arg130, Arg139, and 173 to 176 (EKGN). Arg183 provides a ligand contact to 5-phospho-alpha-D-ribose 1-diphosphate. 2 residues coordinate GTP: Arg200 and Arg229. Residue 235 to 243 (YPILSTGNT) participates in 5-phospho-alpha-D-ribose 1-diphosphate binding. Position 296–298 (296–298 (THF)) interacts with uracil.

Belongs to the UPRTase family.

It localises to the cytoplasm. It is found in the nucleus. This chain is Uracil phosphoribosyltransferase homolog (UPRT), found in Bos taurus (Bovine).